The following is a 270-amino-acid chain: Phosphatidylglycerol--prolipoprotein diacylglyceryl transferase (270 aa).

Transmembrane regions (helical) follow at residues 17-37, 63-83, and 95-115; these read LAIHWYGLTYLAAFGLFMFLG, ILFLGVLGVVVGGRLGYCLFY, and IFYIWQGGMSFHGGLLGVIAS. Arginine 146 contacts a 1,2-diacyl-sn-glycero-3-phospho-(1'-sn-glycerol). A run of 3 helical transmembrane segments spans residues 182–202, 209–229, and 243–263; these read SQVYQFLMEGLLLFVLLWLYA, GEVAAAFLVGYGCFRFIAEYF, and MSMGQWLCVPMIVAGVLLWVW.

This sequence belongs to the Lgt family.

It is found in the cell inner membrane. The enzyme catalyses L-cysteinyl-[prolipoprotein] + a 1,2-diacyl-sn-glycero-3-phospho-(1'-sn-glycerol) = an S-1,2-diacyl-sn-glyceryl-L-cysteinyl-[prolipoprotein] + sn-glycerol 1-phosphate + H(+). It participates in protein modification; lipoprotein biosynthesis (diacylglyceryl transfer). Its function is as follows. Catalyzes the transfer of the diacylglyceryl group from phosphatidylglycerol to the sulfhydryl group of the N-terminal cysteine of a prolipoprotein, the first step in the formation of mature lipoproteins. The sequence is that of Phosphatidylglycerol--prolipoprotein diacylglyceryl transferase from Paracidovorax citrulli (strain AAC00-1) (Acidovorax citrulli).